The sequence spans 639 residues: mRNA export factor (639 aa).

Disordered regions lie at residues 1–45, 63–287, and 322–355; these read MQAE…SLES, LLGD…KWGA, and CTAR…SQPR. Residues 142–152 show a composition bias toward basic residues; the sequence is PRRRTHARSRS. Low complexity predominate over residues 153–169; sequence PRAGSTSSQQPPSSSGG. Basic and acidic residues predominate over residues 175-189; the sequence is VRREAGDRETSEKPA. Residues 203–215 show a composition bias toward polar residues; it reads HQCQSPPAQTASQ. Composition is skewed to basic and acidic residues over residues 234–247 and 326–348; these read RTPH…HEGA and DPAR…ERRT. The Zn(2+) site is built by Cys525, His606, Cys610, and Cys615. Residues 525–615 form a CHC2-type zinc finger; it reads CHLAASKSPL…HANVCRKEEC (91 aa).

Belongs to the HHV-1 ICP27 protein family.

It localises to the host cytoplasm. Its subcellular location is the host nucleus. In terms of biological role, multifunctional regulator of the expression of viral genes that mediates nuclear export of viral intronless mRNAs. This immediate early (EI) protein promotes the nuclear export of viral intronless mRNAs. In Amazona oratrix (yellow-headed parrot), this protein is mRNA export factor.